Consider the following 734-residue polypeptide: Ribosome-releasing factor 2, mitochondrial (734 aa).

The transit peptide at 1-25 directs the protein to the mitochondrion; sequence MLQYCLLRRYRFLLRQHAQVIKRCY. Positions 27–303 constitute a tr-type G domain; the sequence is GDIRNIGILA…AVNAYLPMPE (277 aa). GTP is bound by residues 36–43, 100–104, and 154–157; these read AHIDAGKT, DTPGH, and NKMD.

This sequence belongs to the TRAFAC class translation factor GTPase superfamily. Classic translation factor GTPase family. EF-G/EF-2 subfamily.

Its subcellular location is the mitochondrion. Its function is as follows. Mitochondrial GTPase that mediates the disassembly of ribosomes from messenger RNA at the termination of mitochondrial protein biosynthesis. Not involved in the GTP-dependent ribosomal translocation step during translation elongation. This is Ribosome-releasing factor 2, mitochondrial from Drosophila grimshawi (Hawaiian fruit fly).